The chain runs to 226 residues: UPF0758 protein SPT_1135 (226 aa).

The MPN domain maps to 103–225; sequence SILSSQKLAK…YFSYREKTDL (123 aa). 3 residues coordinate Zn(2+): His-174, His-176, and Asp-187. A JAMM motif motif is present at residues 174–187; that stretch reads HNHPSGAVAPSQND.

Belongs to the UPF0758 family.

The chain is UPF0758 protein SPT_1135 from Streptococcus pneumoniae (strain Taiwan19F-14).